The sequence spans 294 residues: NAD kinase (294 aa).

Catalysis depends on Asp74, which acts as the Proton acceptor. Residues 74–75 (DG), 148–149 (NE), His159, Arg176, Asp178, 189–194 (TAYSLS), and Gln249 contribute to the NAD(+) site.

It belongs to the NAD kinase family. The cofactor is a divalent metal cation.

Its subcellular location is the cytoplasm. The enzyme catalyses NAD(+) + ATP = ADP + NADP(+) + H(+). In terms of biological role, involved in the regulation of the intracellular balance of NAD and NADP, and is a key enzyme in the biosynthesis of NADP. Catalyzes specifically the phosphorylation on 2'-hydroxyl of the adenosine moiety of NAD to yield NADP. In Vibrio parahaemolyticus serotype O3:K6 (strain RIMD 2210633), this protein is NAD kinase.